The sequence spans 276 residues: Diaminopimelate epimerase (276 aa).

Residues Asn13, Gln46, and Asn66 each contribute to the substrate site. Cys75 functions as the Proton donor in the catalytic mechanism. Substrate contacts are provided by residues 76-77 (GN), Asn159, Asn192, and 210-211 (ER). Cys219 (proton acceptor) is an active-site residue. Residue 220-221 (GT) coordinates substrate.

This sequence belongs to the diaminopimelate epimerase family. Homodimer.

The protein localises to the cytoplasm. It catalyses the reaction (2S,6S)-2,6-diaminopimelate = meso-2,6-diaminopimelate. It functions in the pathway amino-acid biosynthesis; L-lysine biosynthesis via DAP pathway; DL-2,6-diaminopimelate from LL-2,6-diaminopimelate: step 1/1. Functionally, catalyzes the stereoinversion of LL-2,6-diaminopimelate (L,L-DAP) to meso-diaminopimelate (meso-DAP), a precursor of L-lysine and an essential component of the bacterial peptidoglycan. This is Diaminopimelate epimerase from Cellvibrio japonicus (strain Ueda107) (Pseudomonas fluorescens subsp. cellulosa).